Consider the following 269-residue polypeptide: Malonyl-[acyl-carrier protein] O-methyltransferase (269 aa).

It belongs to the methyltransferase superfamily.

It catalyses the reaction malonyl-[ACP] + S-adenosyl-L-methionine = malonyl-[ACP] methyl ester + S-adenosyl-L-homocysteine. The protein operates within cofactor biosynthesis; biotin biosynthesis. Converts the free carboxyl group of a malonyl-thioester to its methyl ester by transfer of a methyl group from S-adenosyl-L-methionine (SAM). It allows to synthesize pimeloyl-ACP via the fatty acid synthetic pathway. This Bacillus anthracis protein is Malonyl-[acyl-carrier protein] O-methyltransferase.